Consider the following 316-residue polypeptide: Protoheme IX farnesyltransferase (316 aa).

Helical transmembrane passes span 32–52 (VMSLVIFTALTGVLIAPTHVN), 53–73 (PIIGFASLLAIAAGAGASGAL), 98–118 (VARESALAFGMVLALLSVITL), 120–140 (FVANWAAAALLAFTIFFYVVI), 153–173 (IVIGGAAGAFPPIVAYLAVAG), 180–200 (LALFAIIFVWTPPHFWALALV), 226–246 (ILLYTLLLAPIGMTPYFIGFA), 251–271 (GLLSFGLGGVMILHAVRVYLA), and 280–300 (VAMRMFGFSILYLFLLFAAIV).

The protein belongs to the UbiA prenyltransferase family. Protoheme IX farnesyltransferase subfamily.

The protein localises to the cell inner membrane. It catalyses the reaction heme b + (2E,6E)-farnesyl diphosphate + H2O = Fe(II)-heme o + diphosphate. It participates in porphyrin-containing compound metabolism; heme O biosynthesis; heme O from protoheme: step 1/1. Functionally, converts heme B (protoheme IX) to heme O by substitution of the vinyl group on carbon 2 of heme B porphyrin ring with a hydroxyethyl farnesyl side group. The protein is Protoheme IX farnesyltransferase of Methylocella silvestris (strain DSM 15510 / CIP 108128 / LMG 27833 / NCIMB 13906 / BL2).